The primary structure comprises 1067 residues: Kinesin-like protein KIF11 (1067 aa).

The Kinesin motor domain occupies 18-359; it reads NIQVVVRCRP…LEYANRAKNI (342 aa). Residue 105-112 coordinates ATP; sequence GQTGTGKT. Residues 365-480 are a coiled coil; the sequence is VNQKLTKRAL…SKEQLAQEAF (116 aa). T937 carries the post-translational modification Phosphothreonine; by CDK1. The residue at position 1046 (S1046) is a Phosphoserine; by NEK6. The interval 1048–1067 is disordered; sequence IMDEAEQSLPKSKLPLRMQN.

Belongs to the TRAFAC class myosin-kinesin ATPase superfamily. Kinesin family. BimC subfamily. As to quaternary structure, heterotetramer of two heavy and two light chains. Interacts with aurka. Phosphorylation of Thr-937 during mitosis controls the association of this protein with the spindle apparatus. In terms of processing, a subset of this protein primarily localized at the spindle pole is phosphorylated by NEK6 during mitosis. Post-translationally, phosphorylated on a serine residue by aurka.

It is found in the cytoplasm. It localises to the cytoskeleton. Its subcellular location is the spindle pole. In terms of biological role, plus end-directed motor protein required for establishing a bipolar spindle. Associates with both interphase and mitotic spindle microtubules. May be involved in nuclear divisions taking place during the development of unfertilized eggs. Required in non-mitotic cells for transport of secretory proteins from the Golgi complex to the cell surface. This Xenopus tropicalis (Western clawed frog) protein is Kinesin-like protein KIF11.